Consider the following 403-residue polypeptide: Probable tRNA sulfurtransferase (403 aa).

The region spanning 60–165 (QLAEERLKPI…KEGVFLSCRT (106 aa)) is the THUMP domain. ATP-binding positions include 183-184 (ML), 208-209 (HF), R265, G287, and Q296.

The protein belongs to the ThiI family.

The protein resides in the cytoplasm. It carries out the reaction [ThiI sulfur-carrier protein]-S-sulfanyl-L-cysteine + a uridine in tRNA + 2 reduced [2Fe-2S]-[ferredoxin] + ATP + H(+) = [ThiI sulfur-carrier protein]-L-cysteine + a 4-thiouridine in tRNA + 2 oxidized [2Fe-2S]-[ferredoxin] + AMP + diphosphate. The enzyme catalyses [ThiS sulfur-carrier protein]-C-terminal Gly-Gly-AMP + S-sulfanyl-L-cysteinyl-[cysteine desulfurase] + AH2 = [ThiS sulfur-carrier protein]-C-terminal-Gly-aminoethanethioate + L-cysteinyl-[cysteine desulfurase] + A + AMP + 2 H(+). It functions in the pathway cofactor biosynthesis; thiamine diphosphate biosynthesis. Catalyzes the ATP-dependent transfer of a sulfur to tRNA to produce 4-thiouridine in position 8 of tRNAs, which functions as a near-UV photosensor. Also catalyzes the transfer of sulfur to the sulfur carrier protein ThiS, forming ThiS-thiocarboxylate. This is a step in the synthesis of thiazole, in the thiamine biosynthesis pathway. The sulfur is donated as persulfide by IscS. This is Probable tRNA sulfurtransferase from Listeria monocytogenes serotype 4a (strain HCC23).